The chain runs to 329 residues: MATIHFTKVHGSQNDFFLVDEEENLITEWSDEQRADFAIKLCDRKHSLGGADGILYVTKSSEVGPIGQMRVVNSDGSIASMCGNGLRTVARYLLEKHALTEAKVETMKAILDVKKATSLGFDIPTYQVEISPVKFAAETLPMHVGVEKLFNQVIPELDTELAFSAVSVPNPHLITFVDQSVLDSDKQEKLASYLNSENPYFPDGVNVSFVKRLSDDAIYVRTFERGVGFTNACGTAMSACSLIKKMLDNDTFETPLNVYNDGGRVQVTAKEDAAGEISLQLIGNATFVSKGSVRYENDIVTELTNEATAEQALYQALVKEVKEFLKTTE.

Substrate contacts are provided by Asn-14 and Asn-73. The active-site Proton donor is Cys-82. Residues 83–84 (GN), Asn-170, Asn-206, and 224–225 (ER) each bind substrate. Cys-233 functions as the Proton acceptor in the catalytic mechanism. 234-235 (GT) is a binding site for substrate.

It belongs to the diaminopimelate epimerase family. In terms of assembly, homodimer.

It localises to the cytoplasm. The enzyme catalyses (2S,6S)-2,6-diaminopimelate = meso-2,6-diaminopimelate. It functions in the pathway amino-acid biosynthesis; L-lysine biosynthesis via DAP pathway; DL-2,6-diaminopimelate from LL-2,6-diaminopimelate: step 1/1. In terms of biological role, catalyzes the stereoinversion of LL-2,6-diaminopimelate (L,L-DAP) to meso-diaminopimelate (meso-DAP), a precursor of L-lysine and an essential component of the bacterial peptidoglycan. The sequence is that of Diaminopimelate epimerase from Listeria monocytogenes serotype 4a (strain HCC23).